Reading from the N-terminus, the 232-residue chain is Methylthioribulose-1-phosphate dehydratase (232 aa).

Cys91 is a substrate binding site. Residues His109, His111, and His191 each coordinate Zn(2+).

This sequence belongs to the aldolase class II family. MtnB subfamily. The cofactor is Zn(2+).

It localises to the cytoplasm. The enzyme catalyses 5-(methylsulfanyl)-D-ribulose 1-phosphate = 5-methylsulfanyl-2,3-dioxopentyl phosphate + H2O. Its pathway is amino-acid biosynthesis; L-methionine biosynthesis via salvage pathway; L-methionine from S-methyl-5-thio-alpha-D-ribose 1-phosphate: step 2/6. Catalyzes the dehydration of methylthioribulose-1-phosphate (MTRu-1-P) into 2,3-diketo-5-methylthiopentyl-1-phosphate (DK-MTP-1-P). The protein is Methylthioribulose-1-phosphate dehydratase of Schizosaccharomyces japonicus (strain yFS275 / FY16936) (Fission yeast).